The chain runs to 601 residues: Adenine deaminase (601 aa).

It belongs to the metallo-dependent hydrolases superfamily. Adenine deaminase family. Mn(2+) serves as cofactor.

It catalyses the reaction adenine + H2O + H(+) = hypoxanthine + NH4(+). This Ruegeria sp. (strain TM1040) (Silicibacter sp.) protein is Adenine deaminase.